A 153-amino-acid polypeptide reads, in one-letter code: uncharacterized protein (153 aa).

The tract at residues 72–98 (LPISKTNDAERSQQTTKAPVMERTESS) is disordered.

The protein localises to the cytoplasm. It localises to the nucleus. This is an uncharacterized protein from Schizosaccharomyces pombe (strain 972 / ATCC 24843) (Fission yeast).